The sequence spans 215 residues: Sodium channel regulatory subunit beta-2 (215 aa).

The N-terminal stretch at 1-29 (MHRDAWLPRPAFSLTGLSLFFSLVPPGRS) is a signal peptide. Over 30–157 (MEVTAPTTLS…LEVPPERDST (128 aa)) the chain is Extracellular. An Ig-like C2-type domain is found at 32–154 (VTAPTTLSVL…QVLLEVPPER (123 aa)). 3 N-linked (GlcNAc...) asparagine glycosylation sites follow: N42, N66, and N74. 2 disulfides stabilise this stretch: C50–C127 and C72–C75. Residues 158-179 (VAVIVGASVGGFLAVVILVLMV) form a helical membrane-spanning segment. Residues 180 to 215 (VKCVRRKKEQKLSTDDLKTEEEGKMDGEGNAEDGTK) lie on the Cytoplasmic side of the membrane. The tract at residues 188 to 215 (EQKLSTDDLKTEEEGKMDGEGNAEDGTK) is disordered. The span at 189-215 (QKLSTDDLKTEEEGKMDGEGNAEDGTK) shows a compositional bias: basic and acidic residues. At S192 the chain carries Phosphoserine.

The protein belongs to the sodium channel auxiliary subunit SCN2B (TC 8.A.17) family. As to quaternary structure, a voltage-gated sodium (Nav) channel consists of an ion-conducting pore-forming alpha subunit functional on its own that is regulated by one or more beta subunits. The beta subunit SCN2B is disulfide-linked to the pore-forming alpha subunit. Interacts with SCN1A; regulatory subunit of SCN1A/Nav1.1. Interacts with SCN2A; regulatory subunit of SCN2A/Nav1.2. Interacts with SCN3A; regulatory subunit of SCN3A/Nav1.3. Interacts with SCN5A; regulatory subunit of SCN5A/Nav1.5. Interacts with SCN8A; regulatory subunit of SCN8A/Nav1.6. Interacts with SCN9A; regulatory subunit of SCN9A/Nav1.7. Interacts with SCN10A; regulatory subunit of SCN10A/Nav1.8. Interacts with TNR; may play a crucial role in clustering and regulation of activity of SCN2B-containing Nav channels at nodes of Ranvier.

The protein resides in the cell membrane. The protein localises to the cell projection. Its subcellular location is the axon. Regulatory subunit of multiple voltage-gated sodium (Nav) channels directly mediating the depolarization of excitable membranes. Navs, also called VGSCs (voltage-gated sodium channels) or VDSCs (voltage-dependent sodium channels), operate by switching between closed and open conformations depending on the voltage difference across the membrane. In the open conformation they allow Na(+) ions to selectively pass through the pore, along their electrochemical gradient. The influx of Na+ ions provokes membrane depolarization, initiating the propagation of electrical signals throughout cells and tissues. The accessory beta subunits participate in localization and functional modulation of the Nav channels. Modulates the activity of SCN1A/Nav1.1, SCN2A/Nav1.2, SCN2A/Nav1.3, SCN5A/Nav1.5, SCN8A/Nav1.6, SCN9A/Nav1.7 and SCN10A/Nav1.8. This chain is Sodium channel regulatory subunit beta-2, found in Mus musculus (Mouse).